The sequence spans 454 residues: tRNA modification GTPase MnmE (454 aa).

Residues Arg-23, Glu-80, and Lys-120 each coordinate (6S)-5-formyl-5,6,7,8-tetrahydrofolate. The TrmE-type G domain maps to 216-377 (GMKVVIAGRP…LRNHLKQSMG (162 aa)). Asn-226 provides a ligand contact to K(+). Residues 226–231 (NAGKSS), 245–251 (TDIAGTT), 270–273 (DTAG), 335–338 (NKAD), and 358–360 (SAR) contribute to the GTP site. Residue Ser-230 coordinates Mg(2+). K(+)-binding residues include Thr-245, Ile-247, and Thr-250. Thr-251 serves as a coordination point for Mg(2+). Lys-454 contributes to the (6S)-5-formyl-5,6,7,8-tetrahydrofolate binding site.

Belongs to the TRAFAC class TrmE-Era-EngA-EngB-Septin-like GTPase superfamily. TrmE GTPase family. As to quaternary structure, homodimer. Heterotetramer of two MnmE and two MnmG subunits. It depends on K(+) as a cofactor.

It is found in the cytoplasm. Its function is as follows. Exhibits a very high intrinsic GTPase hydrolysis rate. Involved in the addition of a carboxymethylaminomethyl (cmnm) group at the wobble position (U34) of certain tRNAs, forming tRNA-cmnm(5)s(2)U34. The polypeptide is tRNA modification GTPase MnmE (Shigella dysenteriae serotype 1 (strain Sd197)).